The chain runs to 274 residues: Lipoprotein E (274 aa).

Residues 1–20 (MKTTLKMTALAALSAFVLAG) form the signal peptide. C21 carries the N-palmitoyl cysteine lipid modification. C21 carries the S-diacylglycerol cysteine lipid modification.

Its subcellular location is the cell outer membrane. The sequence is that of Lipoprotein E (hel) from Haemophilus influenzae (strain ATCC 51907 / DSM 11121 / KW20 / Rd).